The chain runs to 241 residues: Methylthioribulose-1-phosphate dehydratase (241 aa).

Polar residues predominate over residues 1–11 (MSSLCDTSNGE). A disordered region spans residues 1–20 (MSSLCDTSNGESHADPCQDK). A substrate-binding site is contributed by Cys96. Residues His114 and His116 each coordinate Zn(2+). The active-site Proton donor/acceptor is Glu138. Residue His194 participates in Zn(2+) binding.

The protein belongs to the aldolase class II family. MtnB subfamily. Requires Zn(2+) as cofactor.

The protein localises to the cytoplasm. It carries out the reaction 5-(methylsulfanyl)-D-ribulose 1-phosphate = 5-methylsulfanyl-2,3-dioxopentyl phosphate + H2O. It participates in amino-acid biosynthesis; L-methionine biosynthesis via salvage pathway; L-methionine from S-methyl-5-thio-alpha-D-ribose 1-phosphate: step 2/6. Its function is as follows. Catalyzes the dehydration of methylthioribulose-1-phosphate (MTRu-1-P) into 2,3-diketo-5-methylthiopentyl-1-phosphate (DK-MTP-1-P). Functions in the methionine salvage pathway. May play a role in apoptosis. The sequence is that of Methylthioribulose-1-phosphate dehydratase from Osmerus mordax (Rainbow smelt).